Consider the following 785-residue polypeptide: Uncoating factor OPG117 (785 aa).

Belongs to the orthopoxvirus OPG117 family. As to quaternary structure, homomultimer; hexamer. Interacts with OPG148.

The protein resides in the host cytoplasm. Its function is as follows. Multifunctional protein required for genome uncoating and replication. Major viral uncoating protein that is required for the release of the viral genome from incoming viral cores containing the viral DNA genome. Possesses an ATPase activity that is required for hexamerization and uncoating. The sequence is that of Uncoating factor OPG117 (OPG117) from Cynomys gunnisoni (Gunnison's prairie dog).